A 379-amino-acid polypeptide reads, in one-letter code: Cytochrome b (379 aa).

4 helical membrane passes run 33–53 (FGSL…FLAM), 77–98 (WTIR…FIHV), 113–133 (WNVG…GYVL), and 178–198 (FFAL…IHLL). Heme b is bound by residues His83 and His97. Residues His182 and His196 each coordinate heme b. His201 serves as a coordination point for a ubiquinone. Transmembrane regions (helical) follow at residues 226-246 (TKDF…TLFY), 288-308 (LGGV…PLLQ), 320-340 (LSQF…WIGG), and 347-367 (FITI…LIMP).

This sequence belongs to the cytochrome b family. In terms of assembly, the cytochrome bc1 complex contains 11 subunits: 3 respiratory subunits (MT-CYB, CYC1 and UQCRFS1), 2 core proteins (UQCRC1 and UQCRC2) and 6 low-molecular weight proteins (UQCRH/QCR6, UQCRB/QCR7, UQCRQ/QCR8, UQCR10/QCR9, UQCR11/QCR10 and a cleavage product of UQCRFS1). This cytochrome bc1 complex then forms a dimer. Heme b is required as a cofactor.

It is found in the mitochondrion inner membrane. Its function is as follows. Component of the ubiquinol-cytochrome c reductase complex (complex III or cytochrome b-c1 complex) that is part of the mitochondrial respiratory chain. The b-c1 complex mediates electron transfer from ubiquinol to cytochrome c. Contributes to the generation of a proton gradient across the mitochondrial membrane that is then used for ATP synthesis. This chain is Cytochrome b (MT-CYB), found in Lepilemur edwardsi (Milne-Edwards's sportive lemur).